The following is a 346-amino-acid chain: Peripherin-2 (346 aa).

Topologically, residues 1–24 (MALLKVKFDQKKRVKLAQGLWLMN) are cytoplasmic. Residues 25-43 (WLSVLAGIVLFSLGLFLKI) traverse the membrane as a helical segment. Topologically, residues 44–61 (ELRKRSEVMNNSESHFVP) are lumenal. Asn53 is a glycosylation site (N-linked (GlcNAc...) asparagine). Residues 62-80 (NSLIGVGVLSCVFNSLAGK) traverse the membrane as a helical segment. The Cytoplasmic portion of the chain corresponds to 81-99 (ICYDALDPAKYAKWKPWLK). A helical transmembrane segment spans residues 100-123 (PYLAVCIFFNVILFLVALCCFLLR). At 124–264 (GSLESTLAYG…LNYYSSLMNS (141 aa)) the chain is on the lumenal side. Asn229 carries N-linked (GlcNAc...) asparagine glycosylation. Residues 265–290 (MGVVTLLVWLFEVSITAGLRYLHTAL) form a helical membrane-spanning segment. The Cytoplasmic segment spans residues 291–346 (ESVSNPEDPECESEGWLLEKSVPETWKAFLESFKKLGKSNQVEAEGADAGPAPEAG). Positions 341 to 346 (PAPEAG) are interaction with MREG.

This sequence belongs to the PRPH2/ROM1 family. Homodimer; disulfide-linked. Forms a homotetramer. Forms a heterotetramer with ROM1. Homotetramer and heterotetramer core complexes go on to form higher order complexes by formation of intermolecular disulfide bonds. Interacts with MREG. Interacts with STX3 isoform 3B. Interacts with SNAP25. Expressed in the retina (at protein level).

The protein localises to the membrane. Its subcellular location is the cell projection. The protein resides in the cilium. It localises to the photoreceptor outer segment. It is found in the photoreceptor inner segment. Essential for retina photoreceptor outer segment disk morphogenesis, may also play a role with ROM1 in the maintenance of outer segment disk structure. Required for the maintenance of retinal outer nuclear layer thickness. Required for the correct development and organization of the photoreceptor inner segment. This chain is Peripherin-2 (Prph2), found in Mus musculus (Mouse).